Reading from the N-terminus, the 463-residue chain is ATP synthase subunit beta (463 aa).

151–158 (GGAGVGKT) provides a ligand contact to ATP.

Belongs to the ATPase alpha/beta chains family. In terms of assembly, F-type ATPases have 2 components, CF(1) - the catalytic core - and CF(0) - the membrane proton channel. CF(1) has five subunits: alpha(3), beta(3), gamma(1), delta(1), epsilon(1). CF(0) has three main subunits: a(1), b(2) and c(9-12). The alpha and beta chains form an alternating ring which encloses part of the gamma chain. CF(1) is attached to CF(0) by a central stalk formed by the gamma and epsilon chains, while a peripheral stalk is formed by the delta and b chains.

The protein localises to the cell membrane. The enzyme catalyses ATP + H2O + 4 H(+)(in) = ADP + phosphate + 5 H(+)(out). Produces ATP from ADP in the presence of a proton gradient across the membrane. The catalytic sites are hosted primarily by the beta subunits. This is ATP synthase subunit beta from Clostridium botulinum (strain Okra / Type B1).